Here is an 80-residue protein sequence, read N- to C-terminus: MNIYCRYSSLTLANFLCLLMKLSISCPNSLELKYLDIFCWKVVNGRVTTLSYNIYPFLERSVINGICFTELDTNRVPILR.

This is an uncharacterized protein from Vaccinia virus (strain Copenhagen) (VACV).